Reading from the N-terminus, the 71-residue chain is Pro-glucagon (71 aa).

Belongs to the glucagon family.

The protein localises to the secreted. Functionally, plays a key role in glucose metabolism and homeostasis. Regulates blood glucose by increasing gluconeogenesis and decreasing glycolysis. The polypeptide is Pro-glucagon (gcg) (Piaractus mesopotamicus (Small-scaled pacu)).